We begin with the raw amino-acid sequence, 875 residues long: Outer membrane usher protein FocD (875 aa).

Positions 1–38 (MFFGDGGQLLSDKSLTGSAGGGNNRMKFNILPLAFFIG) are cleaved as a signal peptide. Cys852 and Cys874 form a disulfide bridge.

Belongs to the fimbrial export usher family.

It localises to the cell outer membrane. Functionally, involved in the export and assembly of the F1C fimbriae subunits across the outer membrane. The sequence is that of Outer membrane usher protein FocD (focD) from Escherichia coli.